We begin with the raw amino-acid sequence, 119 residues long: FAD-linked sulfhydryl oxidase (119 aa).

In terms of domain architecture, ERV/ALR sulfhydryl oxidase spans 1 to 97 (MLHWGPKFWR…ISWSEYKNIY (97 aa)). Cys-44 and Cys-47 are oxidised to a cystine.

This sequence belongs to the asfivirus B119L family. As to quaternary structure, interacts with A151R. Requires FAD as cofactor.

It localises to the host cytoplasm. It is found in the virion. The enzyme catalyses 2 R'C(R)SH + O2 = R'C(R)S-S(R)CR' + H2O2. Functionally, FAD-dependent sulfhydryl oxidase that catalyzes the formation of disulfide bonds in viral proteins produced in the cell cytoplasm. The sequence is that of FAD-linked sulfhydryl oxidase from Ornithodoros (relapsing fever ticks).